We begin with the raw amino-acid sequence, 344 residues long: Glycerol-3-phosphate dehydrogenase [NAD(P)+] (344 aa).

4 residues coordinate NADPH: W11, R31, R32, and K105. Residues K105, G133, and S135 each contribute to the sn-glycerol 3-phosphate site. A137 serves as a coordination point for NADPH. The sn-glycerol 3-phosphate site is built by K188, D241, S251, R252, and N253. Catalysis depends on K188, which acts as the Proton acceptor. Residue R252 participates in NADPH binding. E278 is a binding site for NADPH.

It belongs to the NAD-dependent glycerol-3-phosphate dehydrogenase family.

The protein localises to the cytoplasm. The catalysed reaction is sn-glycerol 3-phosphate + NAD(+) = dihydroxyacetone phosphate + NADH + H(+). It catalyses the reaction sn-glycerol 3-phosphate + NADP(+) = dihydroxyacetone phosphate + NADPH + H(+). The protein operates within membrane lipid metabolism; glycerophospholipid metabolism. In terms of biological role, catalyzes the reduction of the glycolytic intermediate dihydroxyacetone phosphate (DHAP) to sn-glycerol 3-phosphate (G3P), the key precursor for phospholipid synthesis. This chain is Glycerol-3-phosphate dehydrogenase [NAD(P)+], found in Acidithiobacillus ferrooxidans (strain ATCC 23270 / DSM 14882 / CIP 104768 / NCIMB 8455) (Ferrobacillus ferrooxidans (strain ATCC 23270)).